The chain runs to 90 residues: UPF0298 protein SSU05_1549 (90 aa).

Belongs to the UPF0298 family.

The protein localises to the cytoplasm. The polypeptide is UPF0298 protein SSU05_1549 (Streptococcus suis (strain 05ZYH33)).